Reading from the N-terminus, the 518-residue chain is Protein nucleotidyltransferase YdiU (518 aa).

Residues glycine 99, glycine 101, arginine 102, lysine 122, aspartate 134, glycine 135, arginine 192, and arginine 199 each coordinate ATP. The active-site Proton acceptor is the aspartate 270. Mg(2+)-binding residues include asparagine 271 and aspartate 280. Aspartate 280 is a binding site for ATP.

The protein belongs to the SELO family. Mg(2+) is required as a cofactor. It depends on Mn(2+) as a cofactor.

The catalysed reaction is L-seryl-[protein] + ATP = 3-O-(5'-adenylyl)-L-seryl-[protein] + diphosphate. It catalyses the reaction L-threonyl-[protein] + ATP = 3-O-(5'-adenylyl)-L-threonyl-[protein] + diphosphate. The enzyme catalyses L-tyrosyl-[protein] + ATP = O-(5'-adenylyl)-L-tyrosyl-[protein] + diphosphate. It carries out the reaction L-histidyl-[protein] + UTP = N(tele)-(5'-uridylyl)-L-histidyl-[protein] + diphosphate. The catalysed reaction is L-seryl-[protein] + UTP = O-(5'-uridylyl)-L-seryl-[protein] + diphosphate. It catalyses the reaction L-tyrosyl-[protein] + UTP = O-(5'-uridylyl)-L-tyrosyl-[protein] + diphosphate. In terms of biological role, nucleotidyltransferase involved in the post-translational modification of proteins. It can catalyze the addition of adenosine monophosphate (AMP) or uridine monophosphate (UMP) to a protein, resulting in modifications known as AMPylation and UMPylation. This Methylobacillus flagellatus (strain ATCC 51484 / DSM 6875 / VKM B-1610 / KT) protein is Protein nucleotidyltransferase YdiU.